Here is a 294-residue protein sequence, read N- to C-terminus: Large ribosomal subunit protein uL2 (294 aa).

Disordered regions lie at residues methionine 1–lysine 37 and glycine 228–glutamine 294. Positions threonine 10–glutamate 22 are enriched in polar residues. The span at glutamate 23–lysine 37 shows a compositional bias: basic and acidic residues. Basic residues predominate over residues lysine 264–arginine 285.

It belongs to the universal ribosomal protein uL2 family. In terms of assembly, part of the 50S ribosomal subunit. Forms a bridge to the 30S subunit in the 70S ribosome.

Functionally, one of the primary rRNA binding proteins. Required for association of the 30S and 50S subunits to form the 70S ribosome, for tRNA binding and peptide bond formation. It has been suggested to have peptidyltransferase activity; this is somewhat controversial. Makes several contacts with the 16S rRNA in the 70S ribosome. The chain is Large ribosomal subunit protein uL2 from Synechococcus sp. (strain JA-3-3Ab) (Cyanobacteria bacterium Yellowstone A-Prime).